The chain runs to 322 residues: Peroxisomal adenine nucleotide carrier 1 (322 aa).

Solcar repeat units follow at residues 5–94, 104–184, and 202–298; these read LESV…FKRV, IGTK…LKQH, and LSAF…ITAT. Transmembrane regions (helical) follow at residues 8-28, 104-124, 158-178, 201-221, 254-274, and 286-306; these read VSEATSGAIGSLLSTTILYPL, IGTKANLLIAAAAGACTSVLI, FDGLGISLLLTSNPAIQYTVF, VLSAFMAFVLGAVSKSVATVL, IPGVVYAIWRKEGMLGFFKGL, and ALLLMIKEKITATTWILILAI.

This sequence belongs to the mitochondrial carrier (TC 2.A.29) family. Expressed in stamens, pollen grains, seeds, leaves, cotyledons, roots, stems, flowers, hypocotyls and siliques.

Its subcellular location is the peroxisome membrane. In terms of biological role, peroxisomal adenine nucleotide transporter catalyzing the counterexchange of ATP with AMP. ATP is needed by reactions that generate acyl-CoA for peroxisomal fatty acid beta-oxidation during postgerminative growth. Required for the beta-oxidation reactions involved in auxin biosynthesis and for the conversion of seed-reserved triacylglycerols into sucrose that is necessary for growth before the onset of photosynthesis. In Arabidopsis thaliana (Mouse-ear cress), this protein is Peroxisomal adenine nucleotide carrier 1 (PNC1).